A 136-amino-acid chain; its full sequence is Cytidine deaminase (136 aa).

One can recognise a CMP/dCMP-type deaminase domain in the interval methionine 1 to glutamate 128. Residue asparagine 42–glutamate 44 participates in substrate binding. Cysteine 53 is a Zn(2+) binding site. Glutamate 55 acts as the Proton donor in catalysis. Residues cysteine 86 and cysteine 89 each contribute to the Zn(2+) site.

This sequence belongs to the cytidine and deoxycytidylate deaminase family. As to quaternary structure, homotetramer. It depends on Zn(2+) as a cofactor.

The catalysed reaction is cytidine + H2O + H(+) = uridine + NH4(+). It carries out the reaction 2'-deoxycytidine + H2O + H(+) = 2'-deoxyuridine + NH4(+). Its function is as follows. This enzyme scavenges exogenous and endogenous cytidine and 2'-deoxycytidine for UMP synthesis. This chain is Cytidine deaminase (cdd), found in Bacillus subtilis (strain 168).